The primary structure comprises 106 residues: Large ribosomal subunit protein uL24 (106 aa).

The protein belongs to the universal ribosomal protein uL24 family. Part of the 50S ribosomal subunit.

In terms of biological role, one of two assembly initiator proteins, it binds directly to the 5'-end of the 23S rRNA, where it nucleates assembly of the 50S subunit. Its function is as follows. One of the proteins that surrounds the polypeptide exit tunnel on the outside of the subunit. In Clostridium acetobutylicum (strain ATCC 824 / DSM 792 / JCM 1419 / IAM 19013 / LMG 5710 / NBRC 13948 / NRRL B-527 / VKM B-1787 / 2291 / W), this protein is Large ribosomal subunit protein uL24.